Reading from the N-terminus, the 451-residue chain is Tubulin beta-1 chain (451 aa).

GTP is bound by residues Gln-11, Glu-73, Ser-142, Gly-146, Thr-147, Gly-148, Asn-208, and Asn-230. A Mg(2+)-binding site is contributed by Glu-73. The tract at residues Gln-430–Ala-451 is disordered. Residues Thr-433–Ala-451 are compositionally biased toward acidic residues.

The protein belongs to the tubulin family. In terms of assembly, dimer of alpha and beta chains. A typical microtubule is a hollow water-filled tube with an outer diameter of 25 nm and an inner diameter of 15 nM. Alpha-beta heterodimers associate head-to-tail to form protofilaments running lengthwise along the microtubule wall with the beta-tubulin subunit facing the microtubule plus end conferring a structural polarity. Microtubules usually have 13 protofilaments but different protofilament numbers can be found in some organisms and specialized cells. Requires Mg(2+) as cofactor.

Its subcellular location is the cytoplasm. The protein resides in the cytoskeleton. Functionally, tubulin is the major constituent of microtubules, a cylinder consisting of laterally associated linear protofilaments composed of alpha- and beta-tubulin heterodimers. Microtubules grow by the addition of GTP-tubulin dimers to the microtubule end, where a stabilizing cap forms. Below the cap, tubulin dimers are in GDP-bound state, owing to GTPase activity of alpha-tubulin. The polypeptide is Tubulin beta-1 chain (Homarus americanus (American lobster)).